The following is a 280-amino-acid chain: Probable 6-phosphogluconolactonase 2 (280 aa).

Belongs to the glucosamine/galactosamine-6-phosphate isomerase family. 6-phosphogluconolactonase subfamily.

The catalysed reaction is 6-phospho-D-glucono-1,5-lactone + H2O = 6-phospho-D-gluconate + H(+). It participates in carbohydrate degradation; pentose phosphate pathway; D-ribulose 5-phosphate from D-glucose 6-phosphate (oxidative stage): step 2/3. Its function is as follows. Hydrolysis of 6-phosphogluconolactone to 6-phosphogluconate. The polypeptide is Probable 6-phosphogluconolactonase 2 (Oryza sativa subsp. indica (Rice)).